Consider the following 760-residue polypeptide: Alpha-amylase (760 aa).

The N-terminal stretch at 1–34 is a signal peptide; the sequence is MSKRSKLLKRRMLSLSVICVLIGYGPVFNPVRSQ. The Ca(2+) site is built by N143, T184, and D192. D222 serves as the catalytic Nucleophile. H226 lines the Ca(2+) pocket. The active-site Proton donor is E262.

The protein belongs to the glycosyl hydrolase 13 family. As to quaternary structure, monomer. The cofactor is Ca(2+).

It carries out the reaction Endohydrolysis of (1-&gt;4)-alpha-D-glucosidic linkages in polysaccharides containing three or more (1-&gt;4)-alpha-linked D-glucose units.. This is Alpha-amylase (amyA) from Clostridium acetobutylicum (strain ATCC 824 / DSM 792 / JCM 1419 / IAM 19013 / LMG 5710 / NBRC 13948 / NRRL B-527 / VKM B-1787 / 2291 / W).